A 32-amino-acid chain; its full sequence is Natriuretic peptide Coa_NP1 (32 aa).

Cysteines 8 and 24 form a disulfide.

The protein belongs to the natriuretic peptide family. Snake NP subfamily. As to expression, expressed by the venom gland.

Its subcellular location is the secreted. Functionally, snake venom natriuretic peptide that exhibits hypotensive and vasodepressor activity in rats. This chain is Natriuretic peptide Coa_NP1, found in Crotalus lutosus abyssus (Grand Canyon rattlesnake).